Consider the following 506-residue polypeptide: 5-OH-xanthotoxin synthase (506 aa).

The helical transmembrane segment at 3–23 threads the bilayer; it reads PVVIFLVLAFPIASVYLLFYH. Positions 365–370 are substrate specificity; the sequence is TGPLLI. C446 is a binding site for heme.

This sequence belongs to the cytochrome P450 family. Requires heme as cofactor.

The protein resides in the microsome membrane. The catalysed reaction is xanthotoxin + reduced [NADPH--hemoprotein reductase] + O2 = 5-hydroxyxanthotoxin + oxidized [NADPH--hemoprotein reductase] + H2O + 2 H(+). The protein operates within secondary metabolite biosynthesis. Its function is as follows. Involved in the biosynthesis of coumarins and furanocoumarins (FCs), natural products required for defense responses against attacks by predators with potential medical and agroindustrial usages such as anticoagulant, rodenticide and artificial vanilla substitutes. Catalyzes the conversion of xanthotoxin into 5-hydroxyxanthotoxin. The polypeptide is 5-OH-xanthotoxin synthase (Pastinaca sativa (Wild parsnip)).